Consider the following 351-residue polypeptide: Alcohol dehydrogenase 2 (351 aa).

7 residues coordinate Zn(2+): C47, H70, C101, C104, C107, C115, and C157. Residues 181–187 (GAGGGLG), D205, K209, 271–273 (VGL), and R343 contribute to the NAD(+) site.

This sequence belongs to the zinc-containing alcohol dehydrogenase family. In terms of assembly, homotetramer. It depends on Zn(2+) as a cofactor.

The enzyme catalyses a primary alcohol + NAD(+) = an aldehyde + NADH + H(+). It catalyses the reaction a secondary alcohol + NAD(+) = a ketone + NADH + H(+). The sequence is that of Alcohol dehydrogenase 2 (sodh-2) from Caenorhabditis elegans.